A 368-amino-acid polypeptide reads, in one-letter code: Histidinol-phosphate aminotransferase (368 aa).

K228 carries the N6-(pyridoxal phosphate)lysine modification.

This sequence belongs to the class-II pyridoxal-phosphate-dependent aminotransferase family. Histidinol-phosphate aminotransferase subfamily. It depends on pyridoxal 5'-phosphate as a cofactor.

The enzyme catalyses L-histidinol phosphate + 2-oxoglutarate = 3-(imidazol-4-yl)-2-oxopropyl phosphate + L-glutamate. It functions in the pathway amino-acid biosynthesis; L-histidine biosynthesis; L-histidine from 5-phospho-alpha-D-ribose 1-diphosphate: step 7/9. This chain is Histidinol-phosphate aminotransferase, found in Methanosarcina mazei (strain ATCC BAA-159 / DSM 3647 / Goe1 / Go1 / JCM 11833 / OCM 88) (Methanosarcina frisia).